The chain runs to 392 residues: NADH-quinone oxidoreductase subunit D (392 aa).

Belongs to the complex I 49 kDa subunit family. In terms of assembly, NDH-1 is composed of 14 different subunits. Subunits NuoB, C, D, E, F, and G constitute the peripheral sector of the complex.

The protein resides in the cell inner membrane. The catalysed reaction is a quinone + NADH + 5 H(+)(in) = a quinol + NAD(+) + 4 H(+)(out). Its function is as follows. NDH-1 shuttles electrons from NADH, via FMN and iron-sulfur (Fe-S) centers, to quinones in the respiratory chain. The immediate electron acceptor for the enzyme in this species is believed to be ubiquinone. Couples the redox reaction to proton translocation (for every two electrons transferred, four hydrogen ions are translocated across the cytoplasmic membrane), and thus conserves the redox energy in a proton gradient. This Rhodospirillum rubrum (strain ATCC 11170 / ATH 1.1.1 / DSM 467 / LMG 4362 / NCIMB 8255 / S1) protein is NADH-quinone oxidoreductase subunit D.